Reading from the N-terminus, the 164-residue chain is T-cell surface glycoprotein CD3 zeta chain (164 aa).

A signal peptide spans 1 to 21 (MKWKVSVLACILHVRFPGAEA). Gln22 carries the post-translational modification Blocked amino end (Gln). Residues 22–30 (QSFGLLDPK) lie on the Extracellular side of the membrane. A helical transmembrane segment spans residues 31-51 (LCYLLDGILFIYGVIITALYL). At 52 to 164 (RAKFSRSAET…ALHMQTLAPR (113 aa)) the chain is on the cytoplasmic side. Ser58 carries the phosphoserine modification. ITAM domains are found at residues 61–89 (TAAN…LEKK), 100–128 (QQRR…EIGT), and 131–159 (ERRR…LHMQ). Phosphotyrosine is present on residues Tyr72 and Tyr83. A compositionally biased stretch (basic and acidic residues) spans 87 to 96 (EKKRARDPEM). A disordered region spans residues 87 to 111 (EKKRARDPEMGGKQQRRRNPQEGVY). Phosphotyrosine occurs at positions 111, 123, 142, and 153. Residues 124 to 143 (SEIGTKGERRRGKGHDGLYQ) are disordered.

Belongs to the CD3Z/FCER1G family. The TCR-CD3 complex is composed of a CD3D/CD3E and a CD3G/CD3E heterodimers that preferentially associate with TCRalpha and TCRbeta, respectively, to form TCRalpha/CD3E/CD3G and TCRbeta/CD3G/CD3E trimers. In turn, the hexamer interacts with CD3Z homodimer to form the TCR-CD3 complex. Alternatively, TCRalpha and TCRbeta can be replaced by TCRgamma and TCRdelta. Interacts with SLA. Interacts with SLA2. Interacts with TRAT1. Interacts with DOCK2. Interacts with SHB. Interacts with ZAP70. Interacts (tyrosine phosphorylated) with SHC1 (via SH2 domain). Interacts with PTPRC. Interacts with CRK; this interaction regulates CD3Z phosphorylation. Interacts (on T cell side) with CD81, ICAM1 and CD9 at immunological synapses between antigen-presenting cells and T cells. Interacts with CD160. Interacts with LY6E. Interacts with LY6E. The signaling subunit of immunoglobulin gamma (IgG) Fc receptor complex. As a homodimer or a heterodimer with FCER1G, associates with the ligand binding subunit FCGR3A (via transmembrane domain); this interaction is a prerequisite for Fc receptor complex expression on the cell surface. Interacts with CD5. In terms of processing, phosphorylated on Tyr residues after T-cell receptor triggering by LCK in association with CD4/CD8. As to expression, CD3Z is expressed in normal lymphoid tissue and in peripheral blood mononuclear cells (PBMCs). Expressed also in retinal ganglion cells.

It is found in the cell membrane. Its function is as follows. Part of the TCR-CD3 complex present on T-lymphocyte cell surface that plays an essential role in adaptive immune response. When antigen presenting cells (APCs) activate T-cell receptor (TCR), TCR-mediated signals are transmitted across the cell membrane by the CD3 chains CD3D, CD3E, CD3G and CD3Z. All CD3 chains contain immunoreceptor tyrosine-based activation motifs (ITAMs) in their cytoplasmic domain. Upon TCR engagement, these motifs become phosphorylated by Src family protein tyrosine kinases LCK and FYN, resulting in the activation of downstream signaling pathways. CD3Z ITAMs phosphorylation creates multiple docking sites for the protein kinase ZAP70 leading to ZAP70 phosphorylation and its conversion into a catalytically active enzyme. Plays an important role in intrathymic T-cell differentiation. Additionally, participates in the activity-dependent synapse formation of retinal ganglion cells (RGCs) in both the retina and dorsal lateral geniculate nucleus (dLGN). This is T-cell surface glycoprotein CD3 zeta chain (Cd247) from Mus musculus (Mouse).